A 695-amino-acid chain; its full sequence is Ubiquitin carboxyl-terminal hydrolase 20 (695 aa).

2 disordered regions span residues 1 to 20 and 42 to 162; these read MLMA…SSIL and SLAL…SLFY. Low complexity-rich tracts occupy residues 9 to 20 and 61 to 86; these read PSSILPRSSSIL and NHDS…SQSV. Acidic residues predominate over residues 112–124; sequence DDIDDDIWGDDDL. The USP domain maps to 176-476; sequence AGLWNLGNSC…DSYILFYARE (301 aa). Cys185 serves as the catalytic Nucleophile. His435 (proton acceptor) is an active-site residue. Residues 556–571 are compositionally biased toward low complexity; it reads SAESSSGEESPMGELL. Disordered stretches follow at residues 556–585 and 674–695; these read SAES…PCTE and AREL…LKTT.

It belongs to the peptidase C19 family.

It catalyses the reaction Thiol-dependent hydrolysis of ester, thioester, amide, peptide and isopeptide bonds formed by the C-terminal Gly of ubiquitin (a 76-residue protein attached to proteins as an intracellular targeting signal).. In terms of biological role, recognizes and hydrolyzes the peptide bond at the C-terminal Gly of ubiquitin. Involved in the processing of poly-ubiquitin precursors as well as that of ubiquitinated proteins. This is Ubiquitin carboxyl-terminal hydrolase 20 (UBP20) from Arabidopsis thaliana (Mouse-ear cress).